A 121-amino-acid polypeptide reads, in one-letter code: Basic phospholipase A2 (121 aa).

Cystine bridges form between cysteine 26/cysteine 114, cysteine 28/cysteine 44, cysteine 43/cysteine 94, cysteine 49/cysteine 121, cysteine 50/cysteine 87, cysteine 57/cysteine 80, and cysteine 74/cysteine 85. Ca(2+) contacts are provided by tyrosine 27, glycine 29, and glycine 31. The active site involves histidine 47. Aspartate 48 contacts Ca(2+). Aspartate 88 is an active-site residue.

In terms of assembly, homopentamer. It depends on Ca(2+) as a cofactor. Expressed by the venom gland.

It localises to the secreted. It carries out the reaction a 1,2-diacyl-sn-glycero-3-phosphocholine + H2O = a 1-acyl-sn-glycero-3-phosphocholine + a fatty acid + H(+). Functionally, snake venom phospholipase A2 (PLA2) that displays moderate myotoxic activity in vivo, and cytotoxic activity in vitro. In vitro, shows anticoagulant activity on human plasma and in mice causes inflammatory cell infiltration and myonecrosis in the gastrocnemius muscles of CD-1 mice 3 hours after injection (100 ug). PLA2 catalyzes the calcium-dependent hydrolysis of the 2-acyl groups in 3-sn-phosphoglycerides. This chain is Basic phospholipase A2, found in Porthidium ophryomegas (Slender hognose viper).